We begin with the raw amino-acid sequence, 89 residues long: Large ribosomal subunit protein bL28 (89 aa).

The protein belongs to the bacterial ribosomal protein bL28 family.

The chain is Large ribosomal subunit protein bL28 from Chlamydia muridarum (strain MoPn / Nigg).